Consider the following 498-residue polypeptide: ATP synthase subunit beta, chloroplastic (498 aa).

ATP is bound at residue 172–179 (GGAGVGKT).

The protein belongs to the ATPase alpha/beta chains family. As to quaternary structure, F-type ATPases have 2 components, CF(1) - the catalytic core - and CF(0) - the membrane proton channel. CF(1) has five subunits: alpha(3), beta(3), gamma(1), delta(1), epsilon(1). CF(0) has four main subunits: a(1), b(1), b'(1) and c(9-12).

Its subcellular location is the plastid. It localises to the chloroplast thylakoid membrane. It catalyses the reaction ATP + H2O + 4 H(+)(in) = ADP + phosphate + 5 H(+)(out). Produces ATP from ADP in the presence of a proton gradient across the membrane. The catalytic sites are hosted primarily by the beta subunits. In Jasminum nudiflorum (Winter jasmine), this protein is ATP synthase subunit beta, chloroplastic.